The sequence spans 374 residues: Coiled-coil domain-containing protein 89 (374 aa).

A disordered region spans residues Met-1 to Lys-40. Thr-16 carries the phosphothreonine modification. Over residues Pro-19–Asn-32 the composition is skewed to basic and acidic residues. Positions Glu-20–Phe-351 form a coiled coil.

The protein belongs to the CCDC89 family. Interacts with HEY1.

The protein localises to the cytoplasm. Its subcellular location is the nucleus. This Homo sapiens (Human) protein is Coiled-coil domain-containing protein 89 (CCDC89).